A 1122-amino-acid polypeptide reads, in one-letter code: Telomerase reverse transcriptase (1122 aa).

The interval 1–239 (MTRAPRCPAV…TKRHLSLTST (239 aa)) is RNA-interacting domain 1. A GQ motif region spans residues 58–205 (MHWGSQPPPA…RPVGRNFTNL (148 aa)). The tract at residues 137-141 (WMLLL) is required for regulating specificity for telomeric DNA and for processivity for primer elongation. A disordered region spans residues 213-296 (SSSRQEAPKP…KDLSSKGKVS (84 aa)). Residues 240 to 328 (SVPSAKKARC…PRQNAFQLRP (89 aa)) form a linker region. Residues 284–295 (TAEKDLSSKGKV) show a composition bias toward basic and acidic residues. The segment at 306-528 (CKHKPSSTSL…VPAAEHRLRE (223 aa)) is required for oligomerization. The segment at 329 to 540 (FIETRHFLYS…LATFLFWLMD (212 aa)) is RNA-interacting domain 2. The TFLY; involved in RNA binding signature appears at 332-337 (TRHFLY). The segment at 381-511 (LCRTHRLSRR…MKVEDCHWLR (131 aa)) is QFP motif. Residues 402–422 (LVNHAECQYVRLLRSHCRFRT) are CP motif. Serine 447 carries the phosphoserine; by DYRK2 modification. The region spanning 595-928 (EVRHHQDTWL…CLFPWCGLLL (334 aa)) is the Reverse transcriptase domain. Tyrosine 697 is subject to Phosphotyrosine; by SRC-type Tyr-kinases. Mg(2+) contacts are provided by aspartate 702, aspartate 861, and aspartate 862. The tract at residues 907 to 921 (LGGAAPYQLPAHCLF) is required for oligomerization. The interval 923–927 (WCGLL) is primer grip sequence. Residues 929-1122 (DTQTLEVFCD…LSTDFQTILD (194 aa)) are CTE.

It belongs to the reverse transcriptase family. Telomerase subfamily. In terms of assembly, catalytic component of the telomerase holoenzyme complex composed of one molecule of TERT, one molecule of WRAP53/TCAB1, two molecules of H/ACA ribonucleoprotein complex subunits DKC1, NOP10, NHP2 and GAR1, and a telomerase RNA template component (TERC). The telomerase holoenzyme complex is associated with TEP1, SMG6/EST1A and POT1. The molecular chaperone HSP90/P23 complex is required for correct assembly and stabilization of the active telomerase. Interacts directly with HSP90A and PTGES3. Interacts with HSPA1A; the interaction occurs in the absence of TERC and dissociates once the complex has formed. Interacts with RAN; the interaction promotes nuclear export of TERT. Interacts with XPO1. Interacts with PTPN11; the interaction retains TERT in the nucleus. Interacts with NCL (via RRM1 and C-terminal RRM4/Arg/Gly-rich domains); the interaction is important for nucleolar localization of TERT. Interacts with SMARCA4 (via the bromodomain); the interaction regulates Wnt-mediated signaling. Interacts with MCRS1 (isoform MCRS2); the interaction inhibits in vitro telomerase activity. Interacts with PIF1; the interaction has no effect on the elongation activity of TERT. Interacts with PML; the interaction recruits TERT to PML bodies and inhibits telomerase activity. Interacts with GNL3L. Interacts with isoform 1 and isoform 2 of NVL. Interacts with DHX36. Interacts with ATF7. Post-translationally, phosphorylation at Tyr-697 under oxidative stress leads to translocation of TERT to the cytoplasm and reduces its antiapoptotic activity. Dephosphorylated by SHP2/PTPN11 leading to nuclear retention. Phosphorylation by the AKT pathway promotes nuclear location. Phosphorylation at the G2/M phase at Ser-447 by DYRK2 promotes ubiquitination by the EDVP complex and degradation. Ubiquitinated by the EDVP complex, a E3 ligase complex following phosphorylation at Ser-447 by DYRK2. Ubiquitinated leads to proteasomal degradation. In terms of tissue distribution, high activity in intestine, liver and testis, moderate in lung, very low in muscle, heart and brain.

It localises to the nucleus. The protein localises to the nucleolus. It is found in the nucleoplasm. The protein resides in the chromosome. Its subcellular location is the telomere. It localises to the cytoplasm. The protein localises to the PML body. The enzyme catalyses DNA(n) + a 2'-deoxyribonucleoside 5'-triphosphate = DNA(n+1) + diphosphate. Its function is as follows. Telomerase is a ribonucleoprotein enzyme essential for the replication of chromosome termini in most eukaryotes. Active in progenitor and cancer cells. Inactive, or very low activity, in normal somatic cells. Catalytic component of the teleromerase holoenzyme complex whose main activity is the elongation of telomeres by acting as a reverse transcriptase that adds simple sequence repeats to chromosome ends by copying a template sequence within the RNA component of the enzyme. Catalyzes the RNA-dependent extension of 3'-chromosomal termini with the 6-nucleotide telomeric repeat unit, 5'-TTAGGG-3'. The catalytic cycle involves primer binding, primer extension and release of product once the template boundary has been reached or nascent product translocation followed by further extension. More active on substrates containing 2 or 3 telomeric repeats. Telomerase activity is regulated by a number of factors including telomerase complex-associated proteins, chaperones and polypeptide modifiers. Modulates Wnt signaling. Plays important roles in aging and antiapoptosis. In Mus musculus (Mouse), this protein is Telomerase reverse transcriptase (Tert).